The following is a 423-amino-acid chain: Calcium up-regulated protein A (423 aa).

Over residues 1-19 (MINIEDISKSSNESEEKQL) the composition is skewed to basic and acidic residues. The tract at residues 1–27 (MINIEDISKSSNESEEKQLKSTSTSSK) is disordered. Ricin B-type lectin domains lie at 27 to 147 (KPKY…WTTF) and 118 to 251 (QGNG…WGIN).

Belongs to the cup family.

The protein localises to the cytoplasm. It localises to the membrane. In terms of biological role, may play an important role in stabilizing and/or regulating the cell membrane during Ca(2+) stress or certain stages of development. This Dictyostelium discoideum (Social amoeba) protein is Calcium up-regulated protein A (cupA).